The following is a 90-amino-acid chain: UPF0335 protein RPA4190 (90 aa).

It belongs to the UPF0335 family.

This is UPF0335 protein RPA4190 from Rhodopseudomonas palustris (strain ATCC BAA-98 / CGA009).